The following is a 467-amino-acid chain: MQSSVYRDKASSIAMILETQRNVEFPHRIVDKRPRKRPRLTWDAAPPLLPPPPPPTVFQPPLYYGPEFASGLVPNFVYPNMFYNGLPRQGSPPWRPDDKDGHYVFVVGDTLTPRYQILSKMGEGTFGQVLECFDNKNKEVVAIKVIRSINKYREAAMIEIDVLQRLTRHDVGGSRCVQIRNWFDYRNHICIVFEKLGPSLYDFLRKNSYRSFPIDLVRELGRQLLESVAYMHDLRLIHTDLKPENILLVSSEYIKIPDYKFLSRPTKDGSYFKNLPKSSAIKLIDFGSTTFEHQDHNYIVSTRHYRAPEVILGVGWNYPCDLWSIGCILVELCSGEALFQTHENLEHLAMMERVLGPLPPHMVLRADRRSEKYFRRGAKLDWPEGATSRDSLKAVWKLPRLPNLIMQHVDHSAGDLIDLLQGLLRYDPTERFKAREALNHPFFTRSREQSIPPFNPNPHPFLYNQKN.

The 329-residue stretch at 115-443 folds into the Protein kinase domain; it reads YQILSKMGEG…AREALNHPFF (329 aa). ATP-binding positions include 121–129 and Lys-144; that span reads MGEGTFGQV. Asp-240 functions as the Proton acceptor in the catalytic mechanism. The tract at residues 447–467 is disordered; the sequence is REQSIPPFNPNPHPFLYNQKN.

Belongs to the protein kinase superfamily. CMGC Ser/Thr protein kinase family. Lammer subfamily.

It carries out the reaction L-seryl-[protein] + ATP = O-phospho-L-seryl-[protein] + ADP + H(+). It catalyses the reaction L-threonyl-[protein] + ATP = O-phospho-L-threonyl-[protein] + ADP + H(+). The enzyme catalyses L-tyrosyl-[protein] + ATP = O-phospho-L-tyrosyl-[protein] + ADP + H(+). In terms of biological role, activator of yeast transcription factor, STE12. The protein is Serine/threonine-protein kinase AFC1 (AFC1) of Arabidopsis thaliana (Mouse-ear cress).